Reading from the N-terminus, the 2213-residue chain is Protein sidekick-1 (2213 aa).

The interval 1–73 is disordered; that stretch reads MARGARPSAA…GAGRCGGRRA (73 aa). Positions 23-38 are enriched in low complexity; that stretch reads AGPGRPRGSPPGRARP. Ig-like C2-type domains are found at residues 104–186, 191–277, 293–378, 386–476, and 480–569; these read PYFK…SEVQ, GSFM…SPFI, PTIV…RATA, PYFT…LDVT, and PVFT…ATLT. A disulfide bridge links Cys-126 with Cys-169. Residues Asn-271 and Asn-301 are each glycosylated (N-linked (GlcNAc...) asparagine). Intrachain disulfides connect Cys-315-Cys-362, Cys-408-Cys-458, and Cys-501-Cys-553. 3 N-linked (GlcNAc...) asparagine glycosylation sites follow: Asn-550, Asn-563, and Asn-572. The 90-residue stretch at 574–663 folds into the Ig-like C2-type 6 domain; that stretch reads TSIVHPPEDH…GNDSRMARLE (90 aa). Cys-595 and Cys-647 are disulfide-bonded. Asn-655, Asn-679, Asn-782, Asn-821, Asn-882, Asn-1015, and Asn-1024 each carry an N-linked (GlcNAc...) asparagine glycan. 13 consecutive Fibronectin type-III domains span residues 670 to 766, 771 to 867, 872 to 970, 974 to 1068, 1072 to 1171, 1176 to 1274, 1279 to 1376, 1380 to 1474, 1479 to 1576, 1581 to 1699, 1704 to 1800, 1804 to 1899, and 1902 to 2000; these read SPQN…LPEE, PPKN…TLQG, PPQN…TQED, AVGH…VPPD, APSN…TLQA, APTS…TRES, APEN…TKDD, PPVR…TEKR, PPRE…TLQD, PPGS…VGEA, APQN…THQA, APSF…AGPA, and SPGS…SAQV. Asn-1282 and Asn-1333 each carry an N-linked (GlcNAc...) asparagine glycan. N-linked (GlcNAc...) asparagine glycosylation is found at Asn-1654, Asn-1748, Asn-1767, Asn-1819, and Asn-1893. Residues 2010–2030 form a helical membrane-spanning segment; that stretch reads FLLVMALSSLIVILLVVFALV. Over 2031 to 2213 the chain is Cytoplasmic; the sequence is LHGQNKKYKN…TPLTGFSSFV (183 aa). Residues 2075-2098 are disordered; the sequence is STFSKKNGTRSPPRPSPGGLHYSD. The PDZ-binding signature appears at 2207–2213; sequence TGFSSFV.

The protein belongs to the sidekick family. In terms of assembly, homodimer; mediates homophilic interactions to promote cell adhesion. As to expression, up-regulated in glomeruli in HIV-associated nephropathy. In diseased glomeruli, significantly overexpressed and the expression is no longer restricted to mesangial cells but includes podocytes and parietal epithelial cells.

Its subcellular location is the cell membrane. The protein localises to the synapse. Adhesion molecule that promotes lamina-specific synaptic connections in the retina. Expressed in specific subsets of interneurons and retinal ganglion cells (RGCs) and promotes synaptic connectivity via homophilic interactions. This Homo sapiens (Human) protein is Protein sidekick-1.